An 85-amino-acid polypeptide reads, in one-letter code: Toxin To6 (85 aa).

An N-terminal signal peptide occupies residues 1–20; it reads MSIFPIILALLLIGLDEGEA. The 63-residue stretch at 21–83 folds into the LCN-type CS-alpha/beta domain; it reads LDGYPLSKNN…EMYPGRLPCN (63 aa). 4 disulfide bridges follow: C32–C82, C36–C59, C42–C64, and C46–C66.

As to expression, expressed by the venom gland.

The protein resides in the secreted. In terms of biological role, beta toxins bind voltage-independently at site-4 of sodium channels (Nav) and shift the voltage of activation toward more negative potentials thereby affecting sodium channel activation and promoting spontaneous and repetitive firing. The protein is Toxin To6 of Tityus obscurus (Amazonian scorpion).